We begin with the raw amino-acid sequence, 336 residues long: Neuropeptides B/W receptor type 2 (336 aa).

Residues Met-1–Leu-25 are disordered. The Extracellular portion of the chain corresponds to Met-1–Tyr-45. The segment covering Ser-12–Leu-25 has biased composition (low complexity). Residues Asn-29 and Asn-34 are each glycosylated (N-linked (GlcNAc...) asparagine). Residues Val-46–Cys-68 traverse the membrane as a helical segment. The Cytoplasmic portion of the chain corresponds to Val-69–Thr-80. A helical membrane pass occupies residues His-81–Ala-103. Topologically, residues Glu-104–Asn-127 are extracellular. A disulfide bridge connects residues Cys-117 and Cys-197. Residues Ile-128–Val-146 form a helical membrane-spanning segment. At Leu-147–Val-165 the chain is on the cytoplasmic side. Residues Ala-166–Tyr-188 form a helical membrane-spanning segment. The Extracellular portion of the chain corresponds to Asn-189 to Arg-213. Residues Ile-214–Leu-236 traverse the membrane as a helical segment. The Cytoplasmic segment spans residues Arg-237–Arg-256. The helical transmembrane segment at Lys-257–Ala-279 threads the bilayer. At Ser-280–Leu-293 the chain is on the extracellular side. Residues Val-294–Tyr-316 form a helical membrane-spanning segment. Residues Ala-317 to Ala-336 lie on the Cytoplasmic side of the membrane.

The protein belongs to the G-protein coupled receptor 1 family.

It is found in the cell membrane. In terms of biological role, interacts specifically with a number of opioid ligands. Receptor for neuropeptides B and W, which may be involved in neuroendocrine system regulation, food intake and the organization of other signals. The chain is Neuropeptides B/W receptor type 2 (NPBWR2) from Bos taurus (Bovine).